A 153-amino-acid chain; its full sequence is Lipoprotein signal peptidase (153 aa).

The next 3 membrane-spanning stretches (helical) occupy residues 7 to 27 (LIII…LNNY), 59 to 79 (NLIR…IFYM), and 93 to 113 (SIII…GSVI). Active-site residues include Asp114 and Asp132. A helical membrane pass occupies residues 123–143 (WHFPVFNFADISIFIGFLILI).

Belongs to the peptidase A8 family.

The protein resides in the cell membrane. The enzyme catalyses Release of signal peptides from bacterial membrane prolipoproteins. Hydrolyzes -Xaa-Yaa-Zaa-|-(S,diacylglyceryl)Cys-, in which Xaa is hydrophobic (preferably Leu), and Yaa (Ala or Ser) and Zaa (Gly or Ala) have small, neutral side chains.. It participates in protein modification; lipoprotein biosynthesis (signal peptide cleavage). In terms of biological role, this protein specifically catalyzes the removal of signal peptides from prolipoproteins. In Wigglesworthia glossinidia brevipalpis, this protein is Lipoprotein signal peptidase.